We begin with the raw amino-acid sequence, 157 residues long: Succinate dehydrogenase assembly factor 2-A, mitochondrial (157 aa).

This sequence belongs to the SDHAF2 family. As to quaternary structure, interacts with the flavoprotein subunit within the SDH catalytic dimer.

It localises to the mitochondrion matrix. Its function is as follows. Plays an essential role in the assembly of succinate dehydrogenase (SDH), an enzyme complex (also referred to as respiratory complex II) that is a component of both the tricarboxylic acid (TCA) cycle and the mitochondrial electron transport chain, and which couples the oxidation of succinate to fumarate with the reduction of ubiquinone (coenzyme Q) to ubiquinol. Required for flavinylation (covalent attachment of FAD) of the flavoprotein subunit of the SDH catalytic dimer. This Drosophila willistoni (Fruit fly) protein is Succinate dehydrogenase assembly factor 2-A, mitochondrial.